Here is a 235-residue protein sequence, read N- to C-terminus: UDP-2,3-diacylglucosamine hydrolase (235 aa).

Residues D9, H11, D42, N80, and H115 each contribute to the Mn(2+) site. 80–81 (NR) contacts substrate. 5 residues coordinate substrate: D123, S161, K165, K168, and H196. Mn(2+)-binding residues include H196 and H198.

It belongs to the LpxH family. Mn(2+) is required as a cofactor.

The protein resides in the cell inner membrane. It catalyses the reaction UDP-2-N,3-O-bis[(3R)-3-hydroxytetradecanoyl]-alpha-D-glucosamine + H2O = 2-N,3-O-bis[(3R)-3-hydroxytetradecanoyl]-alpha-D-glucosaminyl 1-phosphate + UMP + 2 H(+). It participates in glycolipid biosynthesis; lipid IV(A) biosynthesis; lipid IV(A) from (3R)-3-hydroxytetradecanoyl-[acyl-carrier-protein] and UDP-N-acetyl-alpha-D-glucosamine: step 4/6. Its function is as follows. Hydrolyzes the pyrophosphate bond of UDP-2,3-diacylglucosamine to yield 2,3-diacylglucosamine 1-phosphate (lipid X) and UMP by catalyzing the attack of water at the alpha-P atom. Involved in the biosynthesis of lipid A, a phosphorylated glycolipid that anchors the lipopolysaccharide to the outer membrane of the cell. The chain is UDP-2,3-diacylglucosamine hydrolase from Actinobacillus succinogenes (strain ATCC 55618 / DSM 22257 / CCUG 43843 / 130Z).